A 183-amino-acid polypeptide reads, in one-letter code: Inosine/xanthosine triphosphatase (183 aa).

D75 is a Mg(2+) binding site. 75 to 76 (DG) provides a ligand contact to substrate.

This sequence belongs to the YjjX NTPase family. Homodimer. Mg(2+) serves as cofactor. Mn(2+) is required as a cofactor.

The catalysed reaction is XTP + H2O = XDP + phosphate + H(+). It catalyses the reaction ITP + H2O = IDP + phosphate + H(+). In terms of biological role, phosphatase that hydrolyzes non-canonical purine nucleotides such as XTP and ITP to their respective diphosphate derivatives. Probably excludes non-canonical purines from DNA/RNA precursor pool, thus preventing their incorporation into DNA/RNA and avoiding chromosomal lesions. The chain is Inosine/xanthosine triphosphatase from Vibrio vulnificus (strain CMCP6).